Consider the following 236-residue polypeptide: Urease accessory protein UreG 2 (236 aa).

Positions 1–40 (MEASVHIGNSVPHAHLHSAAPARPADPVRPDGSRRALRIG) are disordered. GTP is bound at residue 43–50 (GPVGSGKT).

The protein belongs to the SIMIBI class G3E GTPase family. UreG subfamily. In terms of assembly, homodimer. UreD, UreF and UreG form a complex that acts as a GTP-hydrolysis-dependent molecular chaperone, activating the urease apoprotein by helping to assemble the nickel containing metallocenter of UreC. The UreE protein probably delivers the nickel.

The protein resides in the cytoplasm. Functionally, facilitates the functional incorporation of the urease nickel metallocenter. This process requires GTP hydrolysis, probably effectuated by UreG. The sequence is that of Urease accessory protein UreG 2 from Saccharopolyspora erythraea (strain ATCC 11635 / DSM 40517 / JCM 4748 / NBRC 13426 / NCIMB 8594 / NRRL 2338).